The sequence spans 203 residues: Endo-type membrane-bound lytic murein transglycosylase A (203 aa).

Residues 1 to 15 (MKLRWLMWLVVFLAG) form the signal peptide. Cys16 carries N-palmitoyl cysteine lipidation. The S-diacylglycerol cysteine moiety is linked to residue Cys16.

Belongs to the transglycosylase Slt family.

The protein localises to the cell outer membrane. The enzyme catalyses Endolytic cleavage of the (1-&gt;4)-beta-glycosidic linkage between N-acetylmuramic acid (MurNAc) and N-acetylglucosamine (GlcNAc) residues in peptidoglycan with concomitant formation of a 1,6-anhydrobond in the MurNAc residue.. Functionally, murein-degrading enzyme. May play a role in recycling of muropeptides during cell elongation and/or cell division. Preferentially cleaves at a distance of more than two disaccharide units from the ends of the glycan chain. The polypeptide is Endo-type membrane-bound lytic murein transglycosylase A (Cronobacter sakazakii (strain ATCC BAA-894) (Enterobacter sakazakii)).